Here is a 155-residue protein sequence, read N- to C-terminus: S-ribosylhomocysteine lyase (155 aa).

Fe cation is bound by residues His58, His62, and Cys125.

The protein belongs to the LuxS family. In terms of assembly, homodimer. Fe cation serves as cofactor.

The catalysed reaction is S-(5-deoxy-D-ribos-5-yl)-L-homocysteine = (S)-4,5-dihydroxypentane-2,3-dione + L-homocysteine. In terms of biological role, involved in the synthesis of autoinducer 2 (AI-2) which is secreted by bacteria and is used to communicate both the cell density and the metabolic potential of the environment. The regulation of gene expression in response to changes in cell density is called quorum sensing. Catalyzes the transformation of S-ribosylhomocysteine (RHC) to homocysteine (HC) and 4,5-dihydroxy-2,3-pentadione (DPD). The chain is S-ribosylhomocysteine lyase from Helicobacter pylori (strain HPAG1).